Here is a 712-residue protein sequence, read N- to C-terminus: Effector protein HopM1 (712 aa).

Residues 22–58 (DTVPAQTAHPNAVTAGMNPPLTPDQSGSHATESSSAG) are disordered. Polar residues predominate over residues 44–57 (PDQSGSHATESSSA).

In terms of assembly, interacts with the chaperone ShcM. Interacts with host plant BIG5/ATMIN7.

Its subcellular location is the secreted. It localises to the host membrane. In terms of biological role, involved in the suppression of basal resistance and promotion of disease symptoms in plants. Mediates the ubiquitination and degradation, via the host proteasome, of a low-abundance immunity-associated protein in Arabidopsis thaliana. May be involved in the inhibition of a host vesicle trafficking pathway. This Pseudomonas syringae pv. tomato (strain ATCC BAA-871 / DC3000) protein is Effector protein HopM1 (hopM1).